The chain runs to 572 residues: Excitatory amino acid transporter 2 (572 aa).

Polar residues predominate over residues 1-11; that stretch reads MASTEGANNMP. A disordered region spans residues 1-28; it reads MASTEGANNMPKQVEVRMHDSHLSSDEP. At 1 to 44 the chain is on the cytoplasmic side; the sequence is MASTEGANNMPKQVEVRMHDSHLSSDEPKHRNLGMRMCDKLGKN. A phosphoserine mark is found at serine 3, serine 21, serine 24, and serine 25. The span at 14–28 shows a compositional bias: basic and acidic residues; sequence VEVRMHDSHLSSDEP. Cysteine 38 is lipidated: S-palmitoyl cysteine. The next 3 helical transmembrane spans lie at 45 to 64, 88 to 108, and 121 to 142; these read LLLS…GGLL, MLKM…LSGL, and MVYY…VLAI. 2 N-linked (GlcNAc...) asparagine glycosylation sites follow: asparagine 205 and asparagine 215. 3 helical membrane-spanning segments follow: residues 235 to 258, 268 to 295, and 317 to 338; these read FKDG…MGKM, FFNI…ACLI, and ITVI…YFVV. An intramembrane region (discontinuously helical) is located at residues 344–374; the sequence is FSFFAGIFQAWITALGTASSAGTLPVTFRCL. 361-363 serves as a coordination point for L-aspartate; the sequence is ASS. Residues 384-410 form a helical membrane-spanning segment; that stretch reads VTRFVLPVGATINMDGTALYEAVAAIF. Na(+)-binding residues include glycine 392, threonine 394, and asparagine 396. L-aspartate-binding positions include threonine 400, 441 to 445, aspartate 474, and asparagine 481; that span reads IPSAG. Positions 424 to 457 form an intramembrane region, discontinuously helical; it reads IVTVSLTATLASIGAASIPSAGLVTMLLILTAVG. The helical transmembrane segment at 471 to 492 threads the bilayer; the sequence is WLLDRMRTSVNVVGDSFGAGIV. Residues asparagine 481 and aspartate 485 each contribute to the Na(+) site. Phosphoserine occurs at positions 505, 520, 530, and 532. Phosphotyrosine is present on tyrosine 537. Serine 542, serine 558, and serine 562 each carry phosphoserine.

This sequence belongs to the dicarboxylate/amino acid:cation symporter (DAACS) (TC 2.A.23) family. SLC1A2 subfamily. In terms of assembly, homotrimer. Interacts with AJUBA. Glycosylated. In terms of processing, palmitoylation at Cys-38 is not required for correct subcellular localization, but is important for glutamate uptake activity. In terms of tissue distribution, detected in brain. Detected in embryonic forebrain, especially in globus pallidus, perirhinal cortex, lateral hypothalamus, hippocampus, and on fimbria and axonal pathways connecting the neocortex, basal ganglia and thalamus (at protein level). Isoform GLT1 is expressed in the brain. Isoforms GLT-1A and GLT-1B are expressed in the liver.

It localises to the cell membrane. It catalyses the reaction K(+)(in) + L-glutamate(out) + 3 Na(+)(out) + H(+)(out) = K(+)(out) + L-glutamate(in) + 3 Na(+)(in) + H(+)(in). It carries out the reaction K(+)(in) + L-aspartate(out) + 3 Na(+)(out) + H(+)(out) = K(+)(out) + L-aspartate(in) + 3 Na(+)(in) + H(+)(in). The enzyme catalyses D-aspartate(out) + K(+)(in) + 3 Na(+)(out) + H(+)(out) = D-aspartate(in) + K(+)(out) + 3 Na(+)(in) + H(+)(in). Its function is as follows. Sodium-dependent, high-affinity amino acid transporter that mediates the uptake of L-glutamate and also L-aspartate and D-aspartate. Functions as a symporter that transports one amino acid molecule together with two or three Na(+) ions and one proton, in parallel with the counter-transport of one K(+) ion. Mediates Cl(-) flux that is not coupled to amino acid transport; this avoids the accumulation of negative charges due to aspartate and Na(+) symport. Essential for the rapid removal of released glutamate from the synaptic cleft, and for terminating the postsynaptic action of glutamate. The polypeptide is Excitatory amino acid transporter 2 (Slc1a2) (Mus musculus (Mouse)).